The chain runs to 385 residues: U6 small nuclear RNA (adenine-(43)-N(6))-methyltransferase (385 aa).

4 residues coordinate S-adenosyl-L-methionine: R54, G83, E106, and N155.

It belongs to the methyltransferase superfamily. METTL16/RlmF family.

The protein localises to the cytoplasm. Its subcellular location is the nucleus. It carries out the reaction adenosine in U6 snRNA + S-adenosyl-L-methionine = N(6)-methyladenosine in U6 snRNA + S-adenosyl-L-homocysteine + H(+). Its function is as follows. RNA N6-methyltransferase that mediates N6-methylation of adenine of U6 small nuclear RNA (U6 snRNA). The polypeptide is U6 small nuclear RNA (adenine-(43)-N(6))-methyltransferase (Schizosaccharomyces pombe (strain 972 / ATCC 24843) (Fission yeast)).